The chain runs to 418 residues: Light-independent protochlorophyllide reductase subunit N (418 aa).

Cys17, Cys42, and Cys103 together coordinate [4Fe-4S] cluster.

It belongs to the BchN/ChlN family. Protochlorophyllide reductase is composed of three subunits; ChlL, ChlN and ChlB. Forms a heterotetramer of two ChlB and two ChlN subunits. Requires [4Fe-4S] cluster as cofactor.

It catalyses the reaction chlorophyllide a + oxidized 2[4Fe-4S]-[ferredoxin] + 2 ADP + 2 phosphate = protochlorophyllide a + reduced 2[4Fe-4S]-[ferredoxin] + 2 ATP + 2 H2O. The protein operates within porphyrin-containing compound metabolism; chlorophyll biosynthesis (light-independent). Its function is as follows. Component of the dark-operative protochlorophyllide reductase (DPOR) that uses Mg-ATP and reduced ferredoxin to reduce ring D of protochlorophyllide (Pchlide) to form chlorophyllide a (Chlide). This reaction is light-independent. The NB-protein (ChlN-ChlB) is the catalytic component of the complex. This is Light-independent protochlorophyllide reductase subunit N from Prochlorococcus marinus (strain MIT 9211).